The chain runs to 66 residues: Small ribosomal subunit protein bS21A (66 aa).

Positions 34–46 (KHYEKPSVKKKRK) are enriched in basic residues. The interval 34–66 (KHYEKPSVKKKRKQMEAERKRRKAQRFRKPDRD) is disordered.

This sequence belongs to the bacterial ribosomal protein bS21 family.

This Geobacter sulfurreducens (strain ATCC 51573 / DSM 12127 / PCA) protein is Small ribosomal subunit protein bS21A.